Here is a 91-residue protein sequence, read N- to C-terminus: MTRMVQCAKLGKEAEGLDFPPLPGELGKRIYEGISKEAWQAWLKQQTMLINENRLNMADPRARQYLMKQTEKFFFGEGADTAQGYVPPSAE.

Belongs to the Fe(2+)-trafficking protein family.

Functionally, could be a mediator in iron transactions between iron acquisition and iron-requiring processes, such as synthesis and/or repair of Fe-S clusters in biosynthetic enzymes. The polypeptide is Probable Fe(2+)-trafficking protein (Paraburkholderia phytofirmans (strain DSM 17436 / LMG 22146 / PsJN) (Burkholderia phytofirmans)).